Reading from the N-terminus, the 255-residue chain is 2-dehydro-3,6-dideoxy-6-sulfogluconate aldolase (255 aa).

His38 functions as the Proton acceptor in the catalytic mechanism. 2 residues coordinate a divalent metal cation: Glu141 and Asp167.

This sequence belongs to the HpcH/HpaI aldolase family. As to quaternary structure, homohexamer; trimer of dimers. A divalent metal cation is required as a cofactor.

The catalysed reaction is 2-dehydro-3,6-dideoxy-6-sulfo-D-gluconate = (2S)-3-sulfolactaldehyde + pyruvate. In terms of biological role, catalyzes the retro-aldol cleavage of 2-dehydro-3,6-dideoxy-6-sulfo-D-gluconate to (2S)-3-sulfolactaldehyde and pyruvate. Is involved in a degradation pathway of sulfoquinovose (SQ) that allows P.putida SQ1 to use SQ as the sole carbon and energy source for growth. In Pseudomonas putida (Arthrobacter siderocapsulatus), this protein is 2-dehydro-3,6-dideoxy-6-sulfogluconate aldolase.